We begin with the raw amino-acid sequence, 594 residues long: Tripeptidyl-peptidase sed4 (594 aa).

An N-terminal signal peptide occupies residues 1 to 20; the sequence is MLSSTLYAGWLLSLAAPALC. The propeptide at 21 to 187 is removed in mature form; it reads VVQEKLSAVP…AVKLPALPRR (167 aa). N-linked (GlcNAc...) asparagine glycosylation is found at Asn191, Asn229, and Asn250. The 398-residue stretch at 197–594 folds into the Peptidase S53 domain; the sequence is LITPDCLVEM…MKLKELVLSL (398 aa). Residues Glu272, Asp276, and Ser494 each act as charge relay system in the active site. Ca(2+) contacts are provided by Asp536 and Ile537. N-linked (GlcNAc...) asparagine glycosylation is present at Asn568. 2 residues coordinate Ca(2+): Gly572 and Asp574.

The cofactor is Ca(2+). N-glycosylated.

The protein localises to the secreted. It localises to the extracellular space. It catalyses the reaction Release of an N-terminal tripeptide from a polypeptide.. Its function is as follows. Secreted tripeptidyl-peptidase which degrades proteins at acidic pHs and is involved in virulence. This is Tripeptidyl-peptidase sed4 (sed4) from Aspergillus fumigatus (strain ATCC MYA-4609 / CBS 101355 / FGSC A1100 / Af293) (Neosartorya fumigata).